Reading from the N-terminus, the 359-residue chain is GTP 3',8-cyclase 1 (359 aa).

One can recognise a Radical SAM core domain in the interval 21 to 241; sequence RCRRMMGDLR…SLEKRYGRIE (221 aa). Position 30 (Arg30) interacts with GTP. Residues Cys37 and Cys41 each coordinate [4Fe-4S] cluster. S-adenosyl-L-methionine is bound at residue Tyr43. Cys44 is a [4Fe-4S] cluster binding site. Arg80 contacts GTP. S-adenosyl-L-methionine is bound at residue Gly84. Thr115 contacts GTP. Ser139 is an S-adenosyl-L-methionine binding site. Lys176 is a binding site for GTP. An S-adenosyl-L-methionine-binding site is contributed by Met210. [4Fe-4S] cluster is bound by residues Cys273 and Cys276. 278-280 serves as a coordination point for GTP; that stretch reads RSR. [4Fe-4S] cluster is bound at residue Cys290.

It belongs to the radical SAM superfamily. MoaA family. As to quaternary structure, monomer and homodimer. [4Fe-4S] cluster serves as cofactor.

It catalyses the reaction GTP + AH2 + S-adenosyl-L-methionine = (8S)-3',8-cyclo-7,8-dihydroguanosine 5'-triphosphate + 5'-deoxyadenosine + L-methionine + A + H(+). It functions in the pathway cofactor biosynthesis; molybdopterin biosynthesis. Catalyzes the cyclization of GTP to (8S)-3',8-cyclo-7,8-dihydroguanosine 5'-triphosphate. The sequence is that of GTP 3',8-cyclase 1 from Mycobacterium tuberculosis (strain CDC 1551 / Oshkosh).